The following is a 56-amino-acid chain: Botcinic acid biosynthesis cluster B protein 14 (56 aa).

It functions in the pathway polyketide biosynthesis. Part of the gene cluster B that mediates the biosynthesis of botcinic acid and its botcinin derivatives, acetate-derived polyketides that contribute to virulence when combined with the sesquiterpene botrydial. Botcinic acid and its derivatives have been shown to induce chlorosis and necrosis during host plant infection, but also have antifungal activities. Two polyketide synthases, BOA6 and BOA9, are involved in the biosynthesis of botcinins. BOA6 mediates the formation of the per-methylated tetraketide core by condensation of four units of malonyl-CoA with one unit of acetyl-CoA, which would be methylated in activated methylene groups to yield a bicyclic acid intermediate that could then either be converted to botrylactone derivatives or lose the starter acetate unit through a retro-Claisen type C-C bond cleavage to yield botcinin derivatives. The second polyketide synthase, BOA9, is probably required for the biosynthesis of the tetraketide side chain of botcinins. The methyltransferase (MT) domain within BOA6 is probably responsible for the incorporation of four methyl groups. The trans-enoyl reductase BOA5 might take over the enoyl reductase function of BOA6 that misses an ER domain. The monooxygenases BOA2, BOA3 and BOA4 might be involved in further hydroxylations at C4, C5 and C8, whereas BOA7, close to BOA9, could potentially be involved in the hydroxylation at C4 in the side chain of botcinins. This Botryotinia fuckeliana (strain B05.10) (Noble rot fungus) protein is Botcinic acid biosynthesis cluster B protein 14.